Reading from the N-terminus, the 119-residue chain is Large ribosomal subunit protein uL18 (119 aa).

This sequence belongs to the universal ribosomal protein uL18 family. In terms of assembly, part of the 50S ribosomal subunit; part of the 5S rRNA/L5/L18/L25 subcomplex. Contacts the 5S and 23S rRNAs.

This is one of the proteins that bind and probably mediate the attachment of the 5S RNA into the large ribosomal subunit, where it forms part of the central protuberance. The sequence is that of Large ribosomal subunit protein uL18 from Helicobacter pylori (strain HPAG1).